A 95-amino-acid chain; its full sequence is uncharacterized protein (95 aa).

It belongs to the inositol monophosphatase superfamily.

This is an uncharacterized protein from Rhizobium leguminosarum bv. phaseoli.